The primary structure comprises 558 residues: Putative cation/proton antiporter YbaL (558 aa).

Residues 1–3 (MHH) are Periplasmic-facing. The chain crosses the membrane as a helical span at residues 4–24 (ATPLITTIVGGLVLAFILGML). Residues 25–31 (ANKLRIS) lie on the Cytoplasmic side of the membrane. Residues 32 to 52 (PLVGYLLAGVLAGPFTPGFVA) traverse the membrane as a helical segment. Topologically, residues 53–55 (DTK) are periplasmic. Residues 56–76 (LAPELAELGVILLMFGVGLHF) form a helical membrane-spanning segment. Residues 77 to 85 (SLKDLMAVK) are Cytoplasmic-facing. Residues 86–106 (AIAIPGAIAQIAVATLLGMAL) traverse the membrane as a helical segment. The Periplasmic portion of the chain corresponds to 107–112 (SAVLGW). Residues 113–133 (SLMTGIVFGLCLSTASTVVLL) traverse the membrane as a helical segment. Over 134–148 (RALEERQLIDSQRGQ) the chain is Cytoplasmic. A helical membrane pass occupies residues 149 to 169 (IAIGWLIVEDLVMVLTLVLLP). Residues 170–185 (AVAGMMEQGDVGFATL) lie on the Periplasmic side of the membrane. The chain crosses the membrane as a helical span at residues 186 to 206 (AVDMGITIGKVIAFIAIMMLV). The Cytoplasmic segment spans residues 207 to 225 (GRRLVPWIMARSAATGSRE). Residues 226-246 (LFTLSVLALALGVAFGAVELF) traverse the membrane as a helical segment. A topological domain (periplasmic) is located at residue aspartate 247. A helical transmembrane segment spans residues 248-268 (VSFALGAFFAGMVLNESELSH). The Cytoplasmic portion of the chain corresponds to 269–279 (RAAHDTLPLRD). Residues 280 to 300 (AFAVLFFVSVGMLFDPLILIQ) form a helical membrane-spanning segment. Residues 301–303 (QPL) lie on the Periplasmic side of the membrane. The chain crosses the membrane as a helical span at residues 304 to 324 (AVLATLAIILFGKSLAAFFLV). The Cytoplasmic segment spans residues 325–336 (RLFGHSQRTALT). Residues 337–357 (IAASLAQIGEFAFILAGLGMA) form a helical membrane-spanning segment. The Periplasmic segment spans residues 358–367 (LNLLPQAGQN). Residues 368-388 (LVLAGAILSIMLNPVLFALLE) traverse the membrane as a helical segment. The Cytoplasmic segment spans residues 389-558 (KYLAKTETLE…TPPAGEVVTG (170 aa)). In terms of domain architecture, RCK N-terminal spans 417-534 (CNHALLVGYG…TERGANQVVM (118 aa)). AMP contacts are provided by residues 427-428 (RV), 447-448 (ET), 467-468 (NA), glutamate 494, and arginine 514.

It belongs to the monovalent cation:proton antiporter 2 (CPA2) transporter (TC 2.A.37) family.

The protein resides in the cell inner membrane. The protein is Putative cation/proton antiporter YbaL (ybaL) of Escherichia coli (strain K12).